A 197-amino-acid chain; its full sequence is Probable GTP-binding protein EngB (197 aa).

The EngB-type G domain maps to 25–197 (SAPEIAFAGR…VRDEFFKFTR (173 aa)). Residues 33-40 (GRSNVGKS), 60-64 (GCTRQ), 79-82 (DLPG), 146-149 (TKID), and 177-179 (MSI) contribute to the GTP site. The Mg(2+) site is built by S40 and T62.

Belongs to the TRAFAC class TrmE-Era-EngA-EngB-Septin-like GTPase superfamily. EngB GTPase family. The cofactor is Mg(2+).

Its function is as follows. Necessary for normal cell division and for the maintenance of normal septation. This chain is Probable GTP-binding protein EngB, found in Wolbachia sp. subsp. Drosophila simulans (strain wRi).